Here is a 307-residue protein sequence, read N- to C-terminus: 4-hydroxy-3-methylbut-2-enyl diphosphate reductase (307 aa).

C13 is a binding site for [4Fe-4S] cluster. Positions 42 and 75 each coordinate (2E)-4-hydroxy-3-methylbut-2-enyl diphosphate. Dimethylallyl diphosphate-binding residues include H42 and H75. Isopentenyl diphosphate-binding residues include H42 and H75. C97 lines the [4Fe-4S] cluster pocket. H125 provides a ligand contact to (2E)-4-hydroxy-3-methylbut-2-enyl diphosphate. H125 is a binding site for dimethylallyl diphosphate. H125 is an isopentenyl diphosphate binding site. Catalysis depends on E127, which acts as the Proton donor. A (2E)-4-hydroxy-3-methylbut-2-enyl diphosphate-binding site is contributed by T165. C195 contributes to the [4Fe-4S] cluster binding site. S223, S224, N225, and S267 together coordinate (2E)-4-hydroxy-3-methylbut-2-enyl diphosphate. Residues S223, S224, N225, and S267 each coordinate dimethylallyl diphosphate. Residues S223, S224, N225, and S267 each coordinate isopentenyl diphosphate.

Belongs to the IspH family. Requires [4Fe-4S] cluster as cofactor.

It carries out the reaction isopentenyl diphosphate + 2 oxidized [2Fe-2S]-[ferredoxin] + H2O = (2E)-4-hydroxy-3-methylbut-2-enyl diphosphate + 2 reduced [2Fe-2S]-[ferredoxin] + 2 H(+). The enzyme catalyses dimethylallyl diphosphate + 2 oxidized [2Fe-2S]-[ferredoxin] + H2O = (2E)-4-hydroxy-3-methylbut-2-enyl diphosphate + 2 reduced [2Fe-2S]-[ferredoxin] + 2 H(+). Its pathway is isoprenoid biosynthesis; dimethylallyl diphosphate biosynthesis; dimethylallyl diphosphate from (2E)-4-hydroxy-3-methylbutenyl diphosphate: step 1/1. It participates in isoprenoid biosynthesis; isopentenyl diphosphate biosynthesis via DXP pathway; isopentenyl diphosphate from 1-deoxy-D-xylulose 5-phosphate: step 6/6. Its function is as follows. Catalyzes the conversion of 1-hydroxy-2-methyl-2-(E)-butenyl 4-diphosphate (HMBPP) into a mixture of isopentenyl diphosphate (IPP) and dimethylallyl diphosphate (DMAPP). Acts in the terminal step of the DOXP/MEP pathway for isoprenoid precursor biosynthesis. The sequence is that of 4-hydroxy-3-methylbut-2-enyl diphosphate reductase from Chlamydia trachomatis serovar A (strain ATCC VR-571B / DSM 19440 / HAR-13).